The sequence spans 345 residues: Phenylalanine--tRNA ligase alpha subunit (345 aa).

Residue Glu259 participates in Mg(2+) binding.

The protein belongs to the class-II aminoacyl-tRNA synthetase family. Phe-tRNA synthetase alpha subunit type 1 subfamily. In terms of assembly, tetramer of two alpha and two beta subunits. The cofactor is Mg(2+).

It is found in the cytoplasm. The enzyme catalyses tRNA(Phe) + L-phenylalanine + ATP = L-phenylalanyl-tRNA(Phe) + AMP + diphosphate + H(+). The sequence is that of Phenylalanine--tRNA ligase alpha subunit from Nitrosomonas europaea (strain ATCC 19718 / CIP 103999 / KCTC 2705 / NBRC 14298).